The sequence spans 628 residues: Alpha-L-arabinofuranosidase A (628 aa).

A signal peptide spans 1-25 (MVAFSALSGVSALSLLLCLVQHAHG). Asn-36, Asn-51, Asn-74, Asn-152, Asn-171, Asn-260, Asn-359, and Asn-493 each carry an N-linked (GlcNAc...) asparagine glycan.

This sequence belongs to the glycosyl hydrolase 51 family.

It localises to the secreted. The catalysed reaction is Hydrolysis of terminal non-reducing alpha-L-arabinofuranoside residues in alpha-L-arabinosides.. The protein operates within glycan metabolism; L-arabinan degradation. In terms of biological role, alpha-L-arabinofuranosidase involved in the degradation of arabinoxylan, a major component of plant hemicellulose. Acts only on small linear 1,5-alpha-linked L-arabinofuranosyl oligosaccharides. In Aspergillus kawachii (strain NBRC 4308) (White koji mold), this protein is Alpha-L-arabinofuranosidase A (abfA).